The chain runs to 85 residues: U4-theraphotoxin-Hhn1t (85 aa).

The first 22 residues, 1–22, serve as a signal peptide directing secretion; that stretch reads MKVTLIAILTCAAVLVLHTTAA. Residues 23–48 constitute a propeptide that is removed on maturation; that stretch reads EELEAESQLMEVGMPDTELAAVDEER. 3 disulfide bridges follow: cysteine 52/cysteine 66, cysteine 56/cysteine 77, and cysteine 71/cysteine 82.

Belongs to the neurotoxin 12 (Hwtx-2) family. 02 (Hwtx-2) subfamily. In terms of tissue distribution, expressed by the venom gland.

It is found in the secreted. Its function is as follows. Postsynaptic neurotoxin. The polypeptide is U4-theraphotoxin-Hhn1t (Cyriopagopus hainanus (Chinese bird spider)).